Consider the following 488-residue polypeptide: Multidrug resistance outer membrane protein MdtP (488 aa).

An N-terminal signal peptide occupies residues 1-23; that stretch reads MINRQLSRLLLCSILGSTTLISG. A lipid anchor (N-palmitoyl cysteine) is attached at Cys24. The S-diacylglycerol cysteine moiety is linked to residue Cys24.

Belongs to the outer membrane factor (OMF) (TC 1.B.17) family. As to quaternary structure, could be part of a tripartite efflux system composed of MdtN, MdtO and MdtP.

It localises to the cell outer membrane. Could be involved in resistance to puromycin, acriflavine and tetraphenylarsonium chloride. The polypeptide is Multidrug resistance outer membrane protein MdtP (mdtP) (Escherichia coli (strain K12)).